The primary structure comprises 83 residues: RNA-binding protein Hfq (83 aa).

The Sm domain occupies 10–70 (DTFLNQVRKE…ISTVMPLRPI (61 aa)).

This sequence belongs to the Hfq family. As to quaternary structure, homohexamer.

Functionally, RNA chaperone that binds small regulatory RNA (sRNAs) and mRNAs to facilitate mRNA translational regulation in response to envelope stress, environmental stress and changes in metabolite concentrations. Also binds with high specificity to tRNAs. This chain is RNA-binding protein Hfq, found in Desulfitobacterium hafniense (strain DSM 10664 / DCB-2).